A 242-amino-acid chain; its full sequence is UPF0073 membrane protein Rv1085c (242 aa).

7 helical membrane-spanning segments follow: residues valine 42–valine 62, alanine 67–threonine 87, serine 108–alanine 128, valine 133–proline 153, valine 159–leucine 179, alanine 186–valine 206, and phenylalanine 222–phenylalanine 242.

Belongs to the UPF0073 (Hly-III) family.

Its subcellular location is the cell membrane. This chain is UPF0073 membrane protein Rv1085c, found in Mycobacterium tuberculosis (strain ATCC 25618 / H37Rv).